Here is a 275-residue protein sequence, read N- to C-terminus: Large ribosomal subunit protein uL2c (275 aa).

A disordered region spans residues 219–254 (TVRGSVMNPCDHPHGGGEGRAPIGRTRPLTPWGKPA).

Belongs to the universal ribosomal protein uL2 family. In terms of assembly, part of the 50S ribosomal subunit.

It is found in the plastid. Its subcellular location is the chloroplast. In Phaeodactylum tricornutum (strain CCAP 1055/1), this protein is Large ribosomal subunit protein uL2c (rpl2).